The following is a 372-amino-acid chain: sn-glycerol-3-phosphate import ATP-binding protein UgpC (372 aa).

Positions 2-233 (LDIKQLVKTY…PASTFVASFI (232 aa)) constitute an ABC transporter domain. 35-42 (GPSGCGKS) contacts ATP.

It belongs to the ABC transporter superfamily. sn-glycerol-3-phosphate importer (TC 3.A.1.1.3) family. In terms of assembly, the complex is composed of two ATP-binding proteins (UgpC), two transmembrane proteins (UgpA and UgpE) and a solute-binding protein (UgpB).

The protein localises to the cell inner membrane. It carries out the reaction sn-glycerol 3-phosphate(out) + ATP + H2O = sn-glycerol 3-phosphate(in) + ADP + phosphate + H(+). In terms of biological role, part of the ABC transporter complex UgpBAEC involved in sn-glycerol-3-phosphate (G3P) import. Responsible for energy coupling to the transport system. The chain is sn-glycerol-3-phosphate import ATP-binding protein UgpC from Vibrio cholerae serotype O1 (strain ATCC 39315 / El Tor Inaba N16961).